The chain runs to 99 residues: Cobalt transport protein CbiN (99 aa).

A run of 2 helical transmembrane segments spans residues 6–26 (VLMI…YSGL) and 68–88 (SLLF…FFGY).

Belongs to the CbiN family. As to quaternary structure, forms an energy-coupling factor (ECF) transporter complex composed of an ATP-binding protein (A component, CbiO), a transmembrane protein (T component, CbiQ) and 2 possible substrate-capture proteins (S components, CbiM and CbiN) of unknown stoichimetry.

The protein resides in the cell membrane. The protein operates within cofactor biosynthesis; adenosylcobalamin biosynthesis. Functionally, part of the energy-coupling factor (ECF) transporter complex CbiMNOQ involved in cobalt import. This is Cobalt transport protein CbiN from Methanococcus vannielii (strain ATCC 35089 / DSM 1224 / JCM 13029 / OCM 148 / SB).